Reading from the N-terminus, the 443-residue chain is Amino-acid acetyltransferase (443 aa).

An N-acetyltransferase domain is found at 296–434 (EQIRRATIND…KKLMYNYQRR (139 aa)).

Belongs to the acetyltransferase family. ArgA subfamily. As to quaternary structure, homohexamer.

It is found in the cytoplasm. It carries out the reaction L-glutamate + acetyl-CoA = N-acetyl-L-glutamate + CoA + H(+). Its pathway is amino-acid biosynthesis; L-arginine biosynthesis; N(2)-acetyl-L-ornithine from L-glutamate: step 1/4. This chain is Amino-acid acetyltransferase, found in Escherichia fergusonii (strain ATCC 35469 / DSM 13698 / CCUG 18766 / IAM 14443 / JCM 21226 / LMG 7866 / NBRC 102419 / NCTC 12128 / CDC 0568-73).